A 207-amino-acid chain; its full sequence is Large ribosomal subunit protein uL4 (207 aa).

Residues 49-75 are disordered; that stretch reads HAVKNRSAVSGGGRKPWKQKGTGRARA.

This sequence belongs to the universal ribosomal protein uL4 family. Part of the 50S ribosomal subunit.

Its function is as follows. One of the primary rRNA binding proteins, this protein initially binds near the 5'-end of the 23S rRNA. It is important during the early stages of 50S assembly. It makes multiple contacts with different domains of the 23S rRNA in the assembled 50S subunit and ribosome. Forms part of the polypeptide exit tunnel. The protein is Large ribosomal subunit protein uL4 of Leuconostoc mesenteroides subsp. mesenteroides (strain ATCC 8293 / DSM 20343 / BCRC 11652 / CCM 1803 / JCM 6124 / NCDO 523 / NBRC 100496 / NCIMB 8023 / NCTC 12954 / NRRL B-1118 / 37Y).